The primary structure comprises 288 residues: Glycine--tRNA ligase alpha subunit (288 aa).

This sequence belongs to the class-II aminoacyl-tRNA synthetase family. In terms of assembly, tetramer of two alpha and two beta subunits.

Its subcellular location is the cytoplasm. It catalyses the reaction tRNA(Gly) + glycine + ATP = glycyl-tRNA(Gly) + AMP + diphosphate. This chain is Glycine--tRNA ligase alpha subunit, found in Rickettsia canadensis (strain McKiel).